A 261-amino-acid polypeptide reads, in one-letter code: Major biofilm matrix component (261 aa).

The first 27 residues, 1 to 27 (MGMKKKLSLGVASAALGLALVGGGTWA), serve as a signal peptide directing secretion. The interval 241-261 (DHTDKDGYVKENEKAHSEDKN) is disordered.

It belongs to the peptidase M73 family. Forms fibers. Fibers have variable length and are 10-15 nm width. Interacts with obg (AC P20964) in pull-down experiments.

It is found in the secreted. Its subcellular location is the forespore intermembrane space. TasA is the major protein component of the biofilm extracellular matrix. It forms amyloid fibers that bind cells together in the biofilm. Exhibits an antibacterial activity against a variety of Gram-positive and Gram-negative bacteria. In laboratory strains, is also involved in proper spore coat assembly. In Bacillus subtilis (strain 168), this protein is Major biofilm matrix component.